The chain runs to 178 residues: Stage V sporulation protein T (178 aa).

One can recognise a SpoVT-AbrB domain in the interval 5–51 (GIVRRIDDLGRVVIPKEIRRTLRIREGDPLEIFVDRDGEVILKKYSP). The interval 56 to 178 (GDFAKEYADA…AGFLARQMEQ (123 aa)) is GAF-like.

This sequence to B.subtilis AbrB and Abh. As to quaternary structure, homotetramer. Two monomers dimerize via their N-terminal swapped-hairpin domains. These dimers further associate into tetramers through helical interactions between their C-terminal GAF-like domains.

Its function is as follows. Transcriptional factor that positively regulates or negatively the expression of a large number of forespore-specific sigma G-dependent genes. May provide a mechanism of feedback control that is important for forespore development. SpoVT levels during spore formation have a major impact on the germination and the resistance of the resultant spores. The chain is Stage V sporulation protein T from Bacillus subtilis (strain 168).